Consider the following 79-residue polypeptide: Acyl carrier protein (79 aa).

Residues 2 to 77 form the Carrier domain; sequence SDIEARVRKI…HAIDYIKSNA (76 aa). An O-(pantetheine 4'-phosphoryl)serine modification is found at Ser37.

The protein belongs to the acyl carrier protein (ACP) family. 4'-phosphopantetheine is transferred from CoA to a specific serine of apo-ACP by AcpS. This modification is essential for activity because fatty acids are bound in thioester linkage to the sulfhydryl of the prosthetic group.

Its subcellular location is the cytoplasm. It participates in lipid metabolism; fatty acid biosynthesis. Carrier of the growing fatty acid chain in fatty acid biosynthesis. This Xylella fastidiosa (strain M23) protein is Acyl carrier protein.